A 169-amino-acid polypeptide reads, in one-letter code: Putative adenylate kinase (169 aa).

Positions 10, 12, 13, 14, and 15 each coordinate ATP. Positions 28-51 (HLNDLVGTEGLYDGVDADRGSKIV) are NMP. Residues 98–108 (DRGDSPEKAAE) form an LID region. R99 contributes to the ATP binding site.

It belongs to the adenylate kinase family. AK6 subfamily. In terms of assembly, interacts with uS11. Not a structural component of 40S pre-ribosomes, but transiently interacts with them by binding to uS11.

It carries out the reaction AMP + ATP = 2 ADP. It catalyses the reaction ATP + H2O = ADP + phosphate + H(+). Functionally, broad-specificity nucleoside monophosphate (NMP) kinase that catalyzes the reversible transfer of the terminal phosphate group between nucleoside triphosphates and monophosphates. Also has ATPase activity. Involved in the late maturation steps of the 30S ribosomal particles, specifically 16S rRNA maturation. While NMP activity is not required for ribosome maturation, ATPase activity is. Associates transiently with small ribosomal subunit protein uS11. ATP hydrolysis breaks the interaction with uS11. May temporarily remove uS11 from the ribosome to enable a conformational change of the ribosomal RNA that is needed for the final maturation step of the small ribosomal subunit. The sequence is that of Putative adenylate kinase from Halobacterium salinarum (strain ATCC 29341 / DSM 671 / R1).